The chain runs to 475 residues: Ankyrin repeat, SAM and basic leucine zipper domain-containing protein 1 (475 aa).

Residues 1–25 (MAAGTLRGLAVAGGGESSDSEDDGW) form a disordered region. Residues Ser-17, Ser-18, and Ser-20 each carry the phosphoserine modification. ANK repeat units follow at residues 45–74 (EKNE…NVDS), 78–107 (YGWT…NASF), 110–144 (DKLT…DPNT), 148–177 (RLMT…EVNA), 181–210 (NGYT…NKML), and 214–243 (DGRT…PLEG). The SAM domain maps to 272–334 (PYTAFGDLEI…KILAALKELE (63 aa)).

In terms of assembly, interacts with DDX4, PIWIL1, RANBP9 and TDRD1. As to expression, expressed exclusively in testis and ovary with higher levels in testis.

Its subcellular location is the cytoplasm. Plays a central role during spermatogenesis by repressing transposable elements and preventing their mobilization, which is essential for the germline integrity. Acts via the piRNA metabolic process, which mediates the repression of transposable elements during meiosis by forming complexes composed of piRNAs and Piwi proteins and governs the methylation and subsequent repression of transposons. Its association with pi-bodies suggests a participation in the primary piRNAs metabolic process. Required prior to the pachytene stage to facilitate the production of multiple types of piRNAs, including those associated with repeats involved in regulation of retrotransposons. May act by mediating protein-protein interactions during germ cell maturation. This chain is Ankyrin repeat, SAM and basic leucine zipper domain-containing protein 1, found in Mus musculus (Mouse).